We begin with the raw amino-acid sequence, 305 residues long: UDP-3-O-acyl-N-acetylglucosamine deacetylase (305 aa).

Residues His79, His238, and Asp242 each contribute to the Zn(2+) site. The active-site Proton donor is His265.

It belongs to the LpxC family. The cofactor is Zn(2+).

The enzyme catalyses a UDP-3-O-[(3R)-3-hydroxyacyl]-N-acetyl-alpha-D-glucosamine + H2O = a UDP-3-O-[(3R)-3-hydroxyacyl]-alpha-D-glucosamine + acetate. Its pathway is glycolipid biosynthesis; lipid IV(A) biosynthesis; lipid IV(A) from (3R)-3-hydroxytetradecanoyl-[acyl-carrier-protein] and UDP-N-acetyl-alpha-D-glucosamine: step 2/6. Catalyzes the hydrolysis of UDP-3-O-myristoyl-N-acetylglucosamine to form UDP-3-O-myristoylglucosamine and acetate, the committed step in lipid A biosynthesis. In Actinobacillus succinogenes (strain ATCC 55618 / DSM 22257 / CCUG 43843 / 130Z), this protein is UDP-3-O-acyl-N-acetylglucosamine deacetylase.